The primary structure comprises 474 residues: Glutamate--tRNA ligase (474 aa).

The 'HIGH' region motif lies at 11–21; sequence PSPTGFLHIGG. The 'KMSKS' region motif lies at 240–244; the sequence is KLSKR. Lys243 provides a ligand contact to ATP.

It belongs to the class-I aminoacyl-tRNA synthetase family. Glutamate--tRNA ligase type 1 subfamily. In terms of assembly, monomer.

The protein resides in the cytoplasm. It carries out the reaction tRNA(Glu) + L-glutamate + ATP = L-glutamyl-tRNA(Glu) + AMP + diphosphate. Functionally, catalyzes the attachment of glutamate to tRNA(Glu) in a two-step reaction: glutamate is first activated by ATP to form Glu-AMP and then transferred to the acceptor end of tRNA(Glu). The protein is Glutamate--tRNA ligase of Nitrobacter hamburgensis (strain DSM 10229 / NCIMB 13809 / X14).